Here is a 476-residue protein sequence, read N- to C-terminus: NADH-quinone oxidoreductase subunit N (476 aa).

14 helical membrane passes run leucine 4–isoleucine 24, leucine 32–tryptophan 52, glycine 67–glycine 87, glutamate 100–serine 117, leucine 121–tyrosine 141, tyrosine 155–serine 175, leucine 198–phenylalanine 218, proline 230–leucine 250, leucine 263–leucine 283, leucine 291–aspartate 311, alanine 319–leucine 339, alanine 366–glycine 386, valine 406–leucine 426, and valine 447–isoleucine 467.

This sequence belongs to the complex I subunit 2 family. In terms of assembly, NDH-1 is composed of 14 different subunits. Subunits NuoA, H, J, K, L, M, N constitute the membrane sector of the complex.

The protein resides in the cell inner membrane. The catalysed reaction is a quinone + NADH + 5 H(+)(in) = a quinol + NAD(+) + 4 H(+)(out). Functionally, NDH-1 shuttles electrons from NADH, via FMN and iron-sulfur (Fe-S) centers, to quinones in the respiratory chain. The immediate electron acceptor for the enzyme in this species is believed to be ubiquinone. Couples the redox reaction to proton translocation (for every two electrons transferred, four hydrogen ions are translocated across the cytoplasmic membrane), and thus conserves the redox energy in a proton gradient. This is NADH-quinone oxidoreductase subunit N from Chromohalobacter salexigens (strain ATCC BAA-138 / DSM 3043 / CIP 106854 / NCIMB 13768 / 1H11).